The primary structure comprises 930 residues: Type I restriction enzyme SsaAORF53P endonuclease subunit (930 aa).

Residues 254–418 (HQATETSNNG…DGRSTADIFG (165 aa)) form the Helicase ATP-binding domain. 268-274 (TTGSGKT) is an ATP binding site.

This sequence belongs to the HsdR family. In terms of assembly, the type I restriction/modification system is composed of three polypeptides R, M and S.

It carries out the reaction Endonucleolytic cleavage of DNA to give random double-stranded fragments with terminal 5'-phosphates, ATP is simultaneously hydrolyzed.. Its function is as follows. The restriction (R) subunit of a type I restriction enzyme that recognizes an undetermined sequence and cleaves a random distance away. Subunit R is required for both nuclease and ATPase activities, but not for modification. After locating a non-methylated recognition site, the enzyme complex serves as a molecular motor that translocates DNA in an ATP-dependent manner until a collision occurs that triggers cleavage. This is Type I restriction enzyme SsaAORF53P endonuclease subunit from Staphylococcus saprophyticus subsp. saprophyticus (strain ATCC 15305 / DSM 20229 / NCIMB 8711 / NCTC 7292 / S-41).